The following is a 538-amino-acid chain: MAKDQLQVLNALDVAKTQLYHFTAIVIAGMGFFTDAYDLFCISLVTKLLGRIYYFHEGAPKPGILPSGISAAVNGVAFIGTLSGQLFFGWLGDKLGRKKVYGMTLMLMVICSIACGLSFGKTANGVIATLCFFRFWLGFGIGGDYPLSATIMSEYANKKTRGAFIAAVFAMQGFGILAGGIVALIVSAGFKNAYPAPTYSAHGKDSTPPEADYVWRIIVMIGALPALLTYYWRMKMPETARYTALVAKNTVKAAADMSKVLNVEIEEDKATVEKIEENGNSFGLFSKEFLRRHGLHLLGTTSTWFLLDIAFYSQNLFQKDIFSKIGWIPPPETMNALDEVFRIARAQTLIALCSTVPGYWFTVAFIDKMGRFAIQLMGSFFMTVFMFALAIPYDHWTKKENRIGFVIMYSLTFFFANFGPNATTFVVPAEIFPARLRSTCHGISAAAGKAGAIVGAFGFLYAAQSTDPKKVDAGYPTGIGVKNALIVLGCVNFLGMLSTLLVPESKGKSLEEMSKENEGEEENYGTETKGENAQTVPV.

The Cytoplasmic portion of the chain corresponds to 1-24 (MAKDQLQVLNALDVAKTQLYHFTA). Residues 25–45 (IVIAGMGFFTDAYDLFCISLV) traverse the membrane as a helical segment. The Extracellular portion of the chain corresponds to 46–70 (TKLLGRIYYFHEGAPKPGILPSGIS). The helical transmembrane segment at 71–91 (AAVNGVAFIGTLSGQLFFGWL) threads the bilayer. Over 92-99 (GDKLGRKK) the chain is Cytoplasmic. Residues 100–120 (VYGMTLMLMVICSIACGLSFG) form a helical membrane-spanning segment. The Extracellular segment spans residues 121-122 (KT). The chain crosses the membrane as a helical span at residues 123-143 (ANGVIATLCFFRFWLGFGIGG). Over 144 to 164 (DYPLSATIMSEYANKKTRGAF) the chain is Cytoplasmic. Residues 165 to 185 (IAAVFAMQGFGILAGGIVALI) form a helical membrane-spanning segment. Residues 186 to 211 (VSAGFKNAYPAPTYSAHGKDSTPPEA) lie on the Extracellular side of the membrane. A helical transmembrane segment spans residues 212–232 (DYVWRIIVMIGALPALLTYYW). The Cytoplasmic portion of the chain corresponds to 233–292 (RMKMPETARYTALVAKNTVKAAADMSKVLNVEIEEDKATVEKIEENGNSFGLFSKEFLRR). The helical transmembrane segment at 293-313 (HGLHLLGTTSTWFLLDIAFYS) threads the bilayer. Over 314 to 345 (QNLFQKDIFSKIGWIPPPETMNALDEVFRIAR) the chain is Extracellular. The chain crosses the membrane as a helical span at residues 346-366 (AQTLIALCSTVPGYWFTVAFI). At 367–371 (DKMGR) the chain is on the cytoplasmic side. Residues 372–392 (FAIQLMGSFFMTVFMFALAIP) traverse the membrane as a helical segment. Residues 393–402 (YDHWTKKENR) lie on the Extracellular side of the membrane. A helical transmembrane segment spans residues 403–423 (IGFVIMYSLTFFFANFGPNAT). Residues 424–442 (TFVVPAEIFPARLRSTCHG) are Cytoplasmic-facing. Residues 443–463 (ISAAAGKAGAIVGAFGFLYAA) form a helical membrane-spanning segment. The Extracellular segment spans residues 464 to 483 (QSTDPKKVDAGYPTGIGVKN). The chain crosses the membrane as a helical span at residues 484 to 504 (ALIVLGCVNFLGMLSTLLVPE). Residues 505–538 (SKGKSLEEMSKENEGEEENYGTETKGENAQTVPV) lie on the Cytoplasmic side of the membrane. The segment covering 506–517 (KGKSLEEMSKEN) has biased composition (basic and acidic residues). Residues 506 to 538 (KGKSLEEMSKENEGEEENYGTETKGENAQTVPV) form a disordered region.

It belongs to the major facilitator superfamily. Phosphate:H(+) symporter (TC 2.A.1.9) family. In terms of tissue distribution, expressed at low levels in non-mycorrhized roots.

The protein localises to the cell membrane. It carries out the reaction phosphate(in) + H(+)(in) = phosphate(out) + H(+)(out). Functionally, low-affinity transporter for external inorganic phosphate (Pi) probably involved in the acquisition of phosphate released by arbuscular mycorrhizal (AM) fungi during AM symbiosis. This chain is Low affinity inorganic phosphate transporter 3, found in Petunia hybrida (Petunia).